The sequence spans 75 residues: MKFQMIAAVLLIAFCLCVVVTARMELQDVEDMKNGSFQKRRTCIDTIPKSRCTAFQCKNSMKYRLSFCRKTCGTC.

Positions Met1–Ala22 are cleaved as a signal peptide. Residues Arg23–Arg40 constitute a propeptide that is removed on maturation. Positions Cys43–Cys75 constitute a ShKT domain. Disulfide bonds link Cys43-Cys75, Cys52-Cys68, and Cys57-Cys72.

This sequence belongs to the sea anemone type 1 potassium channel toxin family. Type 1a subfamily.

It is found in the secreted. The protein localises to the nematocyst. Functionally, inhibits voltage-gated potassium channels (Kv) with higher potency for Kv1.1/KCNA1 and Kv1.3/KCNA3. The sequence is that of Kappa-thalatoxin-Cad2a from Cryptodendrum adhaesivum (Adhesive sea anemone).